The following is a 1138-amino-acid chain: Mastermind-like protein 3 (1138 aa).

Positions 37–48 (PNSTPAAPSSNH) are enriched in polar residues. Disordered regions lie at residues 37 to 68 (PNST…AAVP), 119 to 148 (EQRA…ASAE), 169 to 188 (RSPL…FSPT), 207 to 237 (PSNM…THTP), 334 to 480 (EEKK…QRAK), and 503 to 547 (QQQQ…PQAF). Over residues 52-64 (GGCGGSGGPGGGS) the composition is skewed to gly residues. Composition is skewed to polar residues over residues 130–139 (GKQQHPSKPQ) and 173–188 (NGDQ…FSPT). Composition is skewed to polar residues over residues 343–359 (QPAT…SVKS) and 372–394 (GSPQ…ATSL). Positions 395–411 (PSVASTPAAPNPASSPA) are enriched in low complexity. The span at 414 to 426 (AVQSPQTPNQAHT) shows a compositional bias: polar residues. Residues 467–480 (QLKQMAAQQQQRAK) show a composition bias toward low complexity. Lysine 603 is subject to N6-acetyllysine. 5 disordered regions span residues 615–662 (RMTP…PRAH), 691–721 (HGQE…MVSG), 968–991 (LQGM…YPLQ), 1024–1084 (AAMG…SQAY), and 1090–1109 (QDVS…PGLP). The span at 633 to 649 (QQQQQQQQQQQQQQQQQ) shows a compositional bias: low complexity. The segment covering 1064–1084 (PPAQQQIPSGSFAPSSQSQAY) has biased composition (polar residues).

This sequence belongs to the mastermind family. In terms of assembly, interacts through its N-terminal region with the ankyrin repeat region of the Notch proteins NOTCH1, NOTCH2, NOTCH3 and NOTCH4. Forms a DNA-binding complex with Notch proteins and RBPSUH/RBP-J kappa.

It is found in the nucleus speckle. In terms of biological role, acts as a transcriptional coactivator for NOTCH proteins. Has been shown to amplify NOTCH-induced transcription of HES1. The polypeptide is Mastermind-like protein 3 (Homo sapiens (Human)).